The following is a 114-amino-acid chain: DNA-binding protein Mbur_0117 (114 aa).

The disordered stretch occupies residues 14–37 (ELQQQQSSPQNDAQAAYQQEQAQA). The span at 16-35 (QQQQSSPQNDAQAAYQQEQA) shows a compositional bias: low complexity.

It belongs to the PDCD5 family.

This Methanococcoides burtonii (strain DSM 6242 / NBRC 107633 / OCM 468 / ACE-M) protein is DNA-binding protein Mbur_0117.